The primary structure comprises 388 residues: Pectin acetylesterase 1 (388 aa).

The N-terminal stretch at 1–24 (MKTLLYWGWSSLAGLILFSILAHG) is a signal peptide. Asn30 and Asn33 each carry an N-linked (GlcNAc...) asparagine glycan. Residues Ser187 and Asp283 each act as charge relay system in the active site. Residue Asn304 is glycosylated (N-linked (GlcNAc...) asparagine). Catalysis depends on His349, which acts as the Charge relay system.

It belongs to the pectinacetylesterase family.

It is found in the secreted. The protein localises to the cell wall. Hydrolyzes acetyl esters in homogalacturonan regions of pectin. In type I primary cell wall, galacturonic acid residues of pectin can be acetylated at the O-2 and O-3 positions. Decreasing the degree of acetylation of pectin gels in vitro alters their physical properties. This Arabidopsis thaliana (Mouse-ear cress) protein is Pectin acetylesterase 1.